The sequence spans 640 residues: MTIPCSRPLFIEPFDLYLFGMGRHRHLYRILGAHPAVQDGEAGYRFAVWAPNARSVHLSGDCNGWRHEGCPLFPVGVSGVWAAFVPGVRRGSLYKFVVRGADGRQEQKADPFALWAEMRPGVASVAWDIDNHAWGDGAWMAERARQGLPLERPVSIYEVHLGSWRRRHGDGHPFLTYDELGDQLIPYATGLGFTHLELLPVAEHPLDQSWGYQTGHYYAPTSRFGSPEGFKRFVDRCHQAGLGVILDWVPAHFPRDAWSLGRFDGTALYEHLDPRLGEHPDWGTYIFNYGRNEVRNFLTANALYWLREFHIDGLRMDAVASMLYLDYSREAGQWLPNRHGGRENLDAVDFLREVNTVIHAEFPGAMTLAEESTAWPGVSRPVYTGGLGFSFKWNMGWMHDTLGYLAEDPIHRAYHHGSLTFSMLYAFSENFVLPLSHDEVVHGKGALLSKMPGDMWQQQANLRLLYAYQWAHPGKKLLFMGGEFGQWNEWDESRELDWCLYRFPAHEGIARLVGDLNRLLRSEPAMHRRDHDWSGFRWVDFADYGSSVISFLRLAAGERPLLWIFNFTPVVRRFYRVPCPRGGTWRELCNTDSAYYGGSDVGNAGAVMAREDHWGGGHFIELTLPPLAAMCFAPVTGQGT.

Aspartate 317 acts as the Nucleophile in catalysis. Glutamate 370 functions as the Proton donor in the catalytic mechanism.

This sequence belongs to the glycosyl hydrolase 13 family. GlgB subfamily. In terms of assembly, monomer.

The enzyme catalyses Transfers a segment of a (1-&gt;4)-alpha-D-glucan chain to a primary hydroxy group in a similar glucan chain.. Its pathway is glycan biosynthesis; glycogen biosynthesis. Functionally, catalyzes the formation of the alpha-1,6-glucosidic linkages in glycogen by scission of a 1,4-alpha-linked oligosaccharide from growing alpha-1,4-glucan chains and the subsequent attachment of the oligosaccharide to the alpha-1,6 position. This is 1,4-alpha-glucan branching enzyme GlgB from Nitratidesulfovibrio vulgaris (strain ATCC 29579 / DSM 644 / CCUG 34227 / NCIMB 8303 / VKM B-1760 / Hildenborough) (Desulfovibrio vulgaris).